We begin with the raw amino-acid sequence, 214 residues long: Protein-L-isoaspartate O-methyltransferase (214 aa).

Residue serine 61 is part of the active site.

It belongs to the methyltransferase superfamily. L-isoaspartyl/D-aspartyl protein methyltransferase family.

It is found in the cytoplasm. The catalysed reaction is [protein]-L-isoaspartate + S-adenosyl-L-methionine = [protein]-L-isoaspartate alpha-methyl ester + S-adenosyl-L-homocysteine. Its function is as follows. Catalyzes the methyl esterification of L-isoaspartyl residues in peptides and proteins that result from spontaneous decomposition of normal L-aspartyl and L-asparaginyl residues. It plays a role in the repair and/or degradation of damaged proteins. In Paramagnetospirillum magneticum (strain ATCC 700264 / AMB-1) (Magnetospirillum magneticum), this protein is Protein-L-isoaspartate O-methyltransferase.